Reading from the N-terminus, the 401-residue chain is Imidazolonepropionase (401 aa).

Residues histidine 70 and histidine 72 each contribute to the Fe(3+) site. The Zn(2+) site is built by histidine 70 and histidine 72. 4-imidazolone-5-propanoate-binding residues include arginine 79, tyrosine 142, and histidine 175. Tyrosine 142 is an N-formimidoyl-L-glutamate binding site. Fe(3+) is bound at residue histidine 238. Histidine 238 contributes to the Zn(2+) binding site. Glutamine 241 is a binding site for 4-imidazolone-5-propanoate. Aspartate 313 is a binding site for Fe(3+). Zn(2+) is bound at residue aspartate 313. N-formimidoyl-L-glutamate is bound by residues asparagine 315 and glycine 317. Threonine 318 contacts 4-imidazolone-5-propanoate.

Belongs to the metallo-dependent hydrolases superfamily. HutI family. Requires Zn(2+) as cofactor. The cofactor is Fe(3+).

Its subcellular location is the cytoplasm. It catalyses the reaction 4-imidazolone-5-propanoate + H2O = N-formimidoyl-L-glutamate. It functions in the pathway amino-acid degradation; L-histidine degradation into L-glutamate; N-formimidoyl-L-glutamate from L-histidine: step 3/3. Catalyzes the hydrolytic cleavage of the carbon-nitrogen bond in imidazolone-5-propanoate to yield N-formimidoyl-L-glutamate. It is the third step in the universal histidine degradation pathway. The chain is Imidazolonepropionase from Xanthomonas oryzae pv. oryzae (strain MAFF 311018).